Consider the following 538-residue polypeptide: Nicotinate phosphoribosyltransferase (538 aa).

Y21 and T210 together coordinate nicotinate. The residue at position 213 (H213) is a Phosphohistidine. R318 contacts nicotinate. T380 contributes to the 5-phospho-alpha-D-ribose 1-diphosphate binding site. At S537 the chain carries Phosphoserine.

Belongs to the NAPRTase family. In terms of assembly, homodimer. Requires Mg(2+) as cofactor. Mn(2+) serves as cofactor. Post-translationally, transiently phosphorylated on a His residue during the reaction cycle. Phosphorylation strongly increases the affinity for substrates and increases the rate of nicotinate D-ribonucleotide production. Dephosphorylation regenerates the low-affinity form of the enzyme, leading to product release.

The protein localises to the cytoplasm. It localises to the cytosol. It carries out the reaction nicotinate + 5-phospho-alpha-D-ribose 1-diphosphate + ATP + H2O = nicotinate beta-D-ribonucleotide + ADP + phosphate + diphosphate. It functions in the pathway cofactor biosynthesis; NAD(+) biosynthesis; nicotinate D-ribonucleotide from nicotinate: step 1/1. Functionally, catalyzes the first step in the biosynthesis of NAD from nicotinic acid, the ATP-dependent synthesis of beta-nicotinate D-ribonucleotide from nicotinate and 5-phospho-D-ribose 1-phosphate. Helps prevent cellular oxidative stress via its role in NAD biosynthesis. The protein is Nicotinate phosphoribosyltransferase (NAPRT) of Homo sapiens (Human).